A 570-amino-acid chain; its full sequence is Low-affinity glucose transporter HXT1 (570 aa).

The segment covering 1–20 (MNSTPDLISPQKSNSSNSYE) has biased composition (polar residues). The disordered stretch occupies residues 1 to 51 (MNSTPDLISPQKSNSSNSYELESGRSKAMNTPEGKNESFHDNLSESQVQPA). Topologically, residues 1–60 (MNSTPDLISPQKSNSSNSYELESGRSKAMNTPEGKNESFHDNLSESQVQPAVAPPNTGKG) are cytoplasmic. Residues Ser-23, Ser-38, and Ser-44 each carry the phosphoserine modification. Residues 34 to 43 (GKNESFHDNL) show a composition bias toward basic and acidic residues. A helical transmembrane segment spans residues 61–81 (VYVTVSICCVMVAFGGFIFGW). Over 82-116 (DTGTISGFVAQTDFLRRFGMKHHDGSHYLSKVRTG) the chain is Extracellular. The chain crosses the membrane as a helical span at residues 117-137 (LIVSIFNIGCAIGGIVLAKLG). The Cytoplasmic portion of the chain corresponds to 138 to 143 (DMYGRR). The chain crosses the membrane as a helical span at residues 144–164 (IGLIVVVVIYTIGIIIQIASI). Residues 165 to 174 (NKWYQYFIGR) lie on the Extracellular side of the membrane. The chain crosses the membrane as a helical span at residues 175 to 195 (IISGLGVGGITVLSPMLISEV). Topologically, residues 196–201 (APSEMR) are cytoplasmic. Residues 202–222 (GTLVSCYQVMITLGIFLGYCT) form a helical membrane-spanning segment. Topologically, residues 223-236 (NFGTKNYSNSVQWR) are extracellular. N-linked (GlcNAc...) asparagine glycosylation is present at Asn-228. Residues 237 to 257 (VPLGLCFAWALFMIGGMMFVP) form a helical membrane-spanning segment. The Cytoplasmic portion of the chain corresponds to 258–340 (ESPRYLVEAG…IQSLQQLTGD (83 aa)). The chain crosses the membrane as a helical span at residues 341–357 (NYFFYYGTIVFQAVGLS). The Extracellular segment spans residues 358–363 (DSFETS). A helical membrane pass occupies residues 364 to 381 (IVFGVVNFFSTCCSLYTV). Residues 382 to 388 (DRFGRRN) are Cytoplasmic-facing. The helical transmembrane segment at 389 to 409 (CLMWGAVGMVCCYVVYASVGV) threads the bilayer. Topologically, residues 410-431 (TRLWPNGQDQPSSKGAGNCMIV) are extracellular. Residues 432-452 (FACFYIFCFATTWAPIAYVVI) form a helical membrane-spanning segment. Residues 453–469 (SECFPLRVKSKCMSIAS) lie on the Cytoplasmic side of the membrane. Residues 470-490 (AANWIWGFLISFFTPFITGAI) form a helical membrane-spanning segment. A topological domain (extracellular) is located at residue Asn-491. A helical membrane pass occupies residues 492-512 (FYYGYVFMGCMVFAYFYVFFF). Residues 513–570 (VPETKGLSLEEVNDMYAEGVLPWKSASWVPVSKRGADYNADDLMHDDQPFYKSLFSRK) are Cytoplasmic-facing.

Belongs to the major facilitator superfamily. Sugar transporter (TC 2.A.1.1) family.

The protein resides in the membrane. Functionally, low-affinity glucose transporter. HXT1 is as well involved in the transport of mannose. In Saccharomyces cerevisiae (strain ATCC 204508 / S288c) (Baker's yeast), this protein is Low-affinity glucose transporter HXT1 (HXT1).